We begin with the raw amino-acid sequence, 592 residues long: A-type ATP synthase subunit A (592 aa).

231 to 238 (GGFGTGKT) lines the ATP pocket.

It belongs to the ATPase alpha/beta chains family. In terms of assembly, has multiple subunits with at least A(3), B(3), C, D, E, F, H, I and proteolipid K(x).

It is found in the cell membrane. It carries out the reaction ATP + H2O + 4 H(+)(in) = ADP + phosphate + 5 H(+)(out). Component of the A-type ATP synthase that produces ATP from ADP in the presence of a proton gradient across the membrane. The A chain is the catalytic subunit. The chain is A-type ATP synthase subunit A from Staphylothermus marinus (strain ATCC 43588 / DSM 3639 / JCM 9404 / F1).